A 424-amino-acid polypeptide reads, in one-letter code: SNF1-related protein kinase regulatory subunit gamma-1 (424 aa).

A2 carries the N-acetylalanine modification. The residue at position 44 (S44) is a Phosphoserine. 4 CBS domains span residues 63–131 (LSSD…EPPS), 185–244 (TFRW…CAGL), 263–324 (MSKD…YHDY), and 350–408 (IMSG…SGYF).

It belongs to the 5'-AMP-activated protein kinase gamma subunit family. As to quaternary structure, subunit of a probable heterotrimeric complex consisting of an alpha catalytic (KIN10 or KIN11) subunit, and a beta (KINB) and a gamma (KING or SNF4) non-catalytic regulatory subunits. Interacts with HXK1 in mitochondrion. Sumoylated by SIZ1. In terms of tissue distribution, expressed in vegetative organs and, to lower extent, in reproductive organs.

The protein resides in the mitochondrion. In terms of biological role, regulatory subunit of the probable trimeric SNF1-related protein kinase (SnRK) complex, which may play a role in a signal transduction cascade regulating gene expression and carbohydrate metabolism in higher plants. The SnRK complex may also be involved in the regulation of fatty acid synthesis by phosphorylation of acetyl-CoA carboxylase and in assimilation of nitrogen by phosphorylating nitrate reductase. The chain is SNF1-related protein kinase regulatory subunit gamma-1 (KING1) from Arabidopsis thaliana (Mouse-ear cress).